A 120-amino-acid polypeptide reads, in one-letter code: NAD(P)H-quinone oxidoreductase subunit 3, chloroplastic (120 aa).

3 consecutive transmembrane segments (helical) span residues 9 to 29 (IFWA…LISG), 64 to 84 (MFAL…PWAM), and 88 to 108 (VLGV…IVGS).

The protein belongs to the complex I subunit 3 family. As to quaternary structure, NDH is composed of at least 16 different subunits, 5 of which are encoded in the nucleus.

It localises to the plastid. The protein resides in the chloroplast thylakoid membrane. The catalysed reaction is a plastoquinone + NADH + (n+1) H(+)(in) = a plastoquinol + NAD(+) + n H(+)(out). It carries out the reaction a plastoquinone + NADPH + (n+1) H(+)(in) = a plastoquinol + NADP(+) + n H(+)(out). In terms of biological role, NDH shuttles electrons from NAD(P)H:plastoquinone, via FMN and iron-sulfur (Fe-S) centers, to quinones in the photosynthetic chain and possibly in a chloroplast respiratory chain. The immediate electron acceptor for the enzyme in this species is believed to be plastoquinone. Couples the redox reaction to proton translocation, and thus conserves the redox energy in a proton gradient. The protein is NAD(P)H-quinone oxidoreductase subunit 3, chloroplastic of Buxus microphylla (Littleleaf boxwood).